The sequence spans 388 residues: Tumor protein p53-inducible protein 13 (388 aa).

A signal peptide spans 1 to 27 (MVPPPPPPSRLLLVALVGLLSLHEVVA). Residues 28-304 (EPAEEAGTRC…ARGPTPRTEE (277 aa)) lie on the Extracellular side of the membrane. The helical transmembrane segment at 305–325 (AAWAAMALTFLLVLLTLATLC) threads the bilayer. Residues 326-388 (TRLHRNFRRS…DSGPDSESSD (63 aa)) lie on the Cytoplasmic side of the membrane. Positions 361-372 (PSRRIKRSRRRP) are enriched in basic residues. The interval 361–388 (PSRRIKRSRRRPLLPPTPDSGPDSESSD) is disordered.

The protein resides in the cell membrane. Its subcellular location is the cytoplasm. May act as a tumor suppressor. Inhibits tumor cell growth, when overexpressed. In Rattus norvegicus (Rat), this protein is Tumor protein p53-inducible protein 13 (Tp53i13).